A 483-amino-acid polypeptide reads, in one-letter code: Glutamyl-tRNA(Gln) amidotransferase subunit A (483 aa).

Active-site charge relay system residues include K77 and S152. S176 serves as the catalytic Acyl-ester intermediate.

This sequence belongs to the amidase family. GatA subfamily. In terms of assembly, heterotrimer of A, B and C subunits.

The catalysed reaction is L-glutamyl-tRNA(Gln) + L-glutamine + ATP + H2O = L-glutaminyl-tRNA(Gln) + L-glutamate + ADP + phosphate + H(+). Functionally, allows the formation of correctly charged Gln-tRNA(Gln) through the transamidation of misacylated Glu-tRNA(Gln) in organisms which lack glutaminyl-tRNA synthetase. The reaction takes place in the presence of glutamine and ATP through an activated gamma-phospho-Glu-tRNA(Gln). The polypeptide is Glutamyl-tRNA(Gln) amidotransferase subunit A (Shouchella clausii (strain KSM-K16) (Alkalihalobacillus clausii)).